A 468-amino-acid chain; its full sequence is Aspartate ammonia-lyase (468 aa).

Positions 99, 138, 139, 140, and 185 each coordinate L-aspartate. Positions Gly315–Asn324 are SS loop. Catalysis depends on Ser316, which acts as the Proton acceptor. 2 residues coordinate L-aspartate: Ser317 and Lys322.

The protein belongs to the class-II fumarase/aspartase family. Aspartase subfamily. Homotetramer.

It carries out the reaction L-aspartate = fumarate + NH4(+). Its function is as follows. Catalyzes the reversible conversion of L-aspartate to fumarate and ammonia. This is Aspartate ammonia-lyase (aspA) from Helicobacter pylori (strain ATCC 700392 / 26695) (Campylobacter pylori).